A 392-amino-acid chain; its full sequence is MIEVQEFRAEVRQWLADNLVGDFAALKGLGGPGREHEAFEERRAWNQHLAAAGLTCLGWPVEHGGRGLSVAHRVAFYEEYARANAPDKVNHFGEELLGPTLIEYGTPEQQKRFLPKILDVTELWCQGYSEPNAGSDLANVSTTAELVGDAEASGATGNQYWVINGQKVWTSLAHWAQWCFVVARTEKGSKRHAGLSYLLVPLDQPGVEIRPINQLTGDSEFNEVFFDDARTEAGLVVGQPGDGWRVAMGTLTFERGVSTLGQQIRYAREHSNLVELAKRTGAADDPLIRERLVQSWTGLQAMRSYALATMDVEQPGQDNVSKLLWANWHRELGEIAMDVQGMAGLTLENGEFDEWQRLYLFSRADTIYGGSNEIQRNIIAERVLGLPREVKG.

Residues 126 to 129 (QGYS) and Ser171 each bind FAD. Glu254 functions as the Proton acceptor in the catalytic mechanism. 371–373 (SNE) contributes to the FAD binding site.

Belongs to the acyl-CoA dehydrogenase family. As to quaternary structure, heterotetramer composed of 2 IpdE1 subunits and 2 IpdE2 subunits. Requires FAD as cofactor.

It carries out the reaction 3-[(3aS,4S,5R,7aS)-5-hydroxy-7a-methyl-1-oxo-octahydro-1H-inden-4-yl]propanoyl-CoA + A = (2E)-3-[(3aS,4S,5R,7aS)-5-hydroxy-7a-methyl-1-oxo-octahydro-1H-inden-4-yl]prop-2-enoyl-CoA + AH2. It functions in the pathway steroid metabolism; cholesterol degradation. Functionally, involved in cholesterol degradation. Catalyzes the dehydrogenation of 5OH-HIP-CoA to 5OH-HIPE-CoA. This Mycolicibacterium smegmatis (strain ATCC 700084 / mc(2)155) (Mycobacterium smegmatis) protein is Acyl-CoA dehydrogenase IpdE1.